The sequence spans 158 residues: Dysbindin domain-containing protein 1 (158 aa).

Disordered regions lie at residues 1 to 50 and 93 to 158; these read MEPP…VPAP and ADSD…PQED. 2 positions are modified to phosphoserine: Ser95 and Ser119. The span at 125–141 shows a compositional bias: basic and acidic residues; it reads TRAEQSHEKQPLGDPER.

Belongs to the dysbindin family.

In Homo sapiens (Human), this protein is Dysbindin domain-containing protein 1 (DBNDD1).